The sequence spans 223 residues: Deoxyribose-phosphate aldolase (223 aa).

Catalysis depends on Asp-89, which acts as the Proton donor/acceptor. Catalysis depends on Lys-152, which acts as the Schiff-base intermediate with acetaldehyde. Lys-181 functions as the Proton donor/acceptor in the catalytic mechanism.

Belongs to the DeoC/FbaB aldolase family. DeoC type 1 subfamily.

It localises to the cytoplasm. It catalyses the reaction 2-deoxy-D-ribose 5-phosphate = D-glyceraldehyde 3-phosphate + acetaldehyde. The protein operates within carbohydrate degradation; 2-deoxy-D-ribose 1-phosphate degradation; D-glyceraldehyde 3-phosphate and acetaldehyde from 2-deoxy-alpha-D-ribose 1-phosphate: step 2/2. In terms of biological role, catalyzes a reversible aldol reaction between acetaldehyde and D-glyceraldehyde 3-phosphate to generate 2-deoxy-D-ribose 5-phosphate. The protein is Deoxyribose-phosphate aldolase of Bacillus cereus (strain ZK / E33L).